Consider the following 239-residue polypeptide: MATNGRHQEVGHKSLLQSDALYQYILETSVYPREPEPMKELREITAKHPWNLMTTSADEGQFLSMLIKLINAKNTMEIGVFTGYSLLATAMALPDDGKILAMDINRENYEIGLPVIEKAGLAHKIEFKEGPALPVLDQMIEDGKYHGSYDFIFVDADKDNYLNYHKRLIDLVKIGGLIGYDNTLWNGSVVAPPDAPLRKYVRYYRDFVLELNKALAADSRIEICQLPVGDGITLCRRIS.

A substrate-binding site is contributed by lysine 13. S-adenosyl-L-methionine-binding positions include threonine 55, glutamate 77, 79-80, serine 85, aspartate 103, and alanine 132; that span reads GV. A substrate-binding site is contributed by aspartate 155. Aspartate 155 serves as a coordination point for a divalent metal cation. Aspartate 157 serves as a coordination point for S-adenosyl-L-methionine. Residues aspartate 181 and asparagine 182 each coordinate a divalent metal cation. Asparagine 186 lines the substrate pocket.

The protein belongs to the class I-like SAM-binding methyltransferase superfamily. Cation-dependent O-methyltransferase family. CCoAMT subfamily. Monomer. It depends on Mg(2+) as a cofactor. In terms of tissue distribution, mostly expressed in the bottom and middle parts of the stems.

The enzyme catalyses (E)-caffeoyl-CoA + S-adenosyl-L-methionine = (E)-feruloyl-CoA + S-adenosyl-L-homocysteine + H(+). It functions in the pathway aromatic compound metabolism; phenylpropanoid biosynthesis. Its function is as follows. Methylates caffeoyl-CoA to feruloyl-CoA and 5-hydroxyferuloyl-CoA to sinapoyl-CoA. Plays a role in the synthesis of feruloylated polysaccharides. Involved in the reinforcement of the plant cell wall. Also involved in the responding to wounding or pathogen challenge by the increased formation of cell wall-bound ferulic acid polymers. In Nicotiana tabacum (Common tobacco), this protein is Caffeoyl-CoA O-methyltransferase 1 (CCOAOMT1).